The chain runs to 467 residues: Putative gluconeogenesis factor (467 aa).

Residues 1 to 12 are compositionally biased toward pro residues; the sequence is MSAPPAPPPDRS. The segment at 1–27 is disordered; sequence MSAPPAPPPDRSAPPDRTDSAQTEPTR.

The protein belongs to the gluconeogenesis factor family.

Its subcellular location is the cytoplasm. Its function is as follows. Required for morphogenesis under gluconeogenic growth conditions. In Deinococcus radiodurans (strain ATCC 13939 / DSM 20539 / JCM 16871 / CCUG 27074 / LMG 4051 / NBRC 15346 / NCIMB 9279 / VKM B-1422 / R1), this protein is Putative gluconeogenesis factor.